A 281-amino-acid polypeptide reads, in one-letter code: Lectin (281 aa).

A signal peptide spans 1–26; sequence MATYKLCSVLALSLTLFLLILNKVNS. Asn-43 and Asn-139 each carry an N-linked (GlcNAc...) asparagine glycan. A propeptide spanning residues 269 to 281 is cleaved from the precursor; sequence AVIPTSNHNTFAI.

It belongs to the leguminous lectin family. As to quaternary structure, homodimer. Post-translationally, a minor C-terminal proteolytic processing site is observed at position 268.

Its function is as follows. Galactose and N-acetyllactosamine specific lectin. Binds to the H-2 blood type determinant fucosyl-N-acetyllactosamine. The polypeptide is Lectin (Erythrina corallodendron (Coral tree)).